Reading from the N-terminus, the 160-residue chain is 2-C-methyl-D-erythritol 2,4-cyclodiphosphate synthase (160 aa).

Residues D10 and H12 each coordinate a divalent metal cation. 4-CDP-2-C-methyl-D-erythritol 2-phosphate contacts are provided by residues 10–12 (DVH) and 36–37 (HS). H44 is an a divalent metal cation binding site. Residues 58 to 60 (DIG), 63 to 67 (FPDTD), 102 to 108 (AQAPKML), 134 to 137 (TTTE), F141, and R144 each bind 4-CDP-2-C-methyl-D-erythritol 2-phosphate.

Belongs to the IspF family. In terms of assembly, homotrimer. The cofactor is a divalent metal cation.

It carries out the reaction 4-CDP-2-C-methyl-D-erythritol 2-phosphate = 2-C-methyl-D-erythritol 2,4-cyclic diphosphate + CMP. Its pathway is isoprenoid biosynthesis; isopentenyl diphosphate biosynthesis via DXP pathway; isopentenyl diphosphate from 1-deoxy-D-xylulose 5-phosphate: step 4/6. In terms of biological role, involved in the biosynthesis of isopentenyl diphosphate (IPP) and dimethylallyl diphosphate (DMAPP), two major building blocks of isoprenoid compounds. Catalyzes the conversion of 4-diphosphocytidyl-2-C-methyl-D-erythritol 2-phosphate (CDP-ME2P) to 2-C-methyl-D-erythritol 2,4-cyclodiphosphate (ME-CPP) with a corresponding release of cytidine 5-monophosphate (CMP). In Shewanella amazonensis (strain ATCC BAA-1098 / SB2B), this protein is 2-C-methyl-D-erythritol 2,4-cyclodiphosphate synthase.